The primary structure comprises 122 residues: uncharacterized protein (122 aa).

Residues 93-113 form a helical membrane-spanning segment; that stretch reads ILRICIVFLSLKIYTLTLVII.

It is found in the membrane. This is an uncharacterized protein from Saccharomyces cerevisiae (strain ATCC 204508 / S288c) (Baker's yeast).